The following is a 497-amino-acid chain: Glycerol kinase (497 aa).

Residue Thr12 participates in ADP binding. Residues Thr12, Thr13, and Ser14 each coordinate ATP. Thr12 contributes to the sn-glycerol 3-phosphate binding site. Residue Arg16 coordinates ADP. Arg82, Glu83, Tyr134, and Asp243 together coordinate sn-glycerol 3-phosphate. Residues Arg82, Glu83, Tyr134, Asp243, and Gln244 each coordinate glycerol. 2 residues coordinate ADP: Thr265 and Gly308. Positions 265, 308, 312, and 411 each coordinate ATP. Gly411 lines the ADP pocket.

It belongs to the FGGY kinase family.

It carries out the reaction glycerol + ATP = sn-glycerol 3-phosphate + ADP + H(+). It participates in polyol metabolism; glycerol degradation via glycerol kinase pathway; sn-glycerol 3-phosphate from glycerol: step 1/1. Its activity is regulated as follows. Inhibited by fructose 1,6-bisphosphate (FBP). Functionally, key enzyme in the regulation of glycerol uptake and metabolism. Catalyzes the phosphorylation of glycerol to yield sn-glycerol 3-phosphate. The polypeptide is Glycerol kinase (Xanthobacter autotrophicus (strain ATCC BAA-1158 / Py2)).